The primary structure comprises 269 residues: tRNA pseudouridine synthase A (269 aa).

The active-site Nucleophile is the Asp-51. Tyr-109 provides a ligand contact to substrate.

This sequence belongs to the tRNA pseudouridine synthase TruA family. As to quaternary structure, homodimer.

It carries out the reaction uridine(38/39/40) in tRNA = pseudouridine(38/39/40) in tRNA. Formation of pseudouridine at positions 38, 39 and 40 in the anticodon stem and loop of transfer RNAs. The sequence is that of tRNA pseudouridine synthase A from Haemophilus influenzae (strain PittGG).